A 188-amino-acid polypeptide reads, in one-letter code: MDQLRQSLLEAPIIEKGDYEYFVHPVSDGVPVLRPELLREIVIKIIRKVEVDNVDKIVTPAAMGIHISTAVSLMTDIPLVVIRKRQYGLEGEVSLSQQTGYAENEMYINDVRDGERVLVLDDVLSTGGTMRAVLDALDQIGAEVVDTVAVIKKAGPNELDESDHDVKTLINVRVTDGTVVIVDSNGDG.

This sequence belongs to the purine/pyrimidine phosphoribosyltransferase family. Archaeal HPRT subfamily.

May catalyze a purine salvage reaction, the substrate is unknown. This chain is HGPRTase-like protein 1, found in Haloquadratum walsbyi (strain DSM 16854 / JCM 12705 / C23).